The chain runs to 114 residues: Nucleoid-associated protein Clos_2855 (114 aa).

This sequence belongs to the YbaB/EbfC family. As to quaternary structure, homodimer.

It is found in the cytoplasm. Its subcellular location is the nucleoid. Functionally, binds to DNA and alters its conformation. May be involved in regulation of gene expression, nucleoid organization and DNA protection. The sequence is that of Nucleoid-associated protein Clos_2855 from Alkaliphilus oremlandii (strain OhILAs) (Clostridium oremlandii (strain OhILAs)).